The chain runs to 274 residues: Undecaprenyl-diphosphatase (274 aa).

8 consecutive transmembrane segments (helical) span residues 6-26 (SLFI…LPVS), 45-65 (AKTF…VMFW), 94-114 (GHIL…HDVI), 117-137 (LFAP…LLAA), 155-174 (YRQA…PGFS), 191-211 (YAAA…ASGL), 223-243 (GDLP…LIAI), and 253-273 (ISFV…YMVF).

This sequence belongs to the UppP family.

Its subcellular location is the cell inner membrane. It catalyses the reaction di-trans,octa-cis-undecaprenyl diphosphate + H2O = di-trans,octa-cis-undecaprenyl phosphate + phosphate + H(+). Its function is as follows. Catalyzes the dephosphorylation of undecaprenyl diphosphate (UPP). Confers resistance to bacitracin. This Serratia proteamaculans (strain 568) protein is Undecaprenyl-diphosphatase.